Reading from the N-terminus, the 488-residue chain is Ribulose bisphosphate carboxylase large chain 1 (488 aa).

2 residues coordinate substrate: Asn-128 and Thr-178. Lys-180 (proton acceptor) is an active-site residue. Lys-182 contacts substrate. Mg(2+) contacts are provided by Lys-206, Asp-208, and Glu-209. Position 206 is an N6-carboxylysine (Lys-206). Residue His-298 is the Proton acceptor of the active site. 3 residues coordinate substrate: Arg-299, His-331, and Ser-383.

This sequence belongs to the RuBisCO large chain family. Type I subfamily. Heterohexadecamer of 8 large chains and 8 small chains. Requires Mg(2+) as cofactor.

The enzyme catalyses 2 (2R)-3-phosphoglycerate + 2 H(+) = D-ribulose 1,5-bisphosphate + CO2 + H2O. It carries out the reaction D-ribulose 1,5-bisphosphate + O2 = 2-phosphoglycolate + (2R)-3-phosphoglycerate + 2 H(+). In terms of biological role, ruBisCO catalyzes two reactions: the carboxylation of D-ribulose 1,5-bisphosphate, the primary event in carbon dioxide fixation, as well as the oxidative fragmentation of the pentose substrate. Both reactions occur simultaneously and in competition at the same active site. This Methylibium petroleiphilum (strain ATCC BAA-1232 / LMG 22953 / PM1) protein is Ribulose bisphosphate carboxylase large chain 1.